We begin with the raw amino-acid sequence, 177 residues long: Large ribosomal subunit protein uL6 (177 aa).

Belongs to the universal ribosomal protein uL6 family. As to quaternary structure, part of the 50S ribosomal subunit.

This protein binds to the 23S rRNA, and is important in its secondary structure. It is located near the subunit interface in the base of the L7/L12 stalk, and near the tRNA binding site of the peptidyltransferase center. The polypeptide is Large ribosomal subunit protein uL6 (Brucella anthropi (strain ATCC 49188 / DSM 6882 / CCUG 24695 / JCM 21032 / LMG 3331 / NBRC 15819 / NCTC 12168 / Alc 37) (Ochrobactrum anthropi)).